The sequence spans 550 residues: Phospholipase B-like 1 (550 aa).

An N-terminal signal peptide occupies residues 1–39 (MCHRSHGRSLRPPSPLLLLLPLLLQSPWAAGAAEKHNSA). Asparagine 72 carries an N-linked (GlcNAc...) (high mannose) asparagine; alternate glycan. Asparagine 72 carries an N-linked (GlcNAc...) (hybrid) asparagine; alternate glycan. Residues 210–228 (LSPTKSSSLKKFKIWEMGH) constitute a propeptide, removed in mature form. Asparagine 309 and asparagine 412 each carry an N-linked (GlcNAc...) (high mannose) asparagine; alternate glycan. Asparagine 309 and asparagine 412 each carry an N-linked (GlcNAc...) (hybrid) asparagine; alternate glycan. 2 cysteine pairs are disulfide-bonded: cysteine 471-cysteine 476 and cysteine 475-cysteine 490. N-linked (GlcNAc...) (high mannose) asparagine; alternate glycosylation is present at asparagine 527. Asparagine 527 carries an N-linked (GlcNAc...) (hybrid) asparagine; alternate glycan.

Belongs to the phospholipase B-like family. May form a homodimer, each monomer is composed of a chain A and a chain B. In terms of processing, the maturation cleavages that produces chains A and B are required to open the putative substrate binding pocket. Both chains A and B remain associated in the mature protein.

It is found in the lysosome. Its function is as follows. Exhibits weak phospholipase activity, acting on various phospholipids, including phosphatidylcholine, phosphatidylinositol, phosphatidylethanolamine and lysophospholipids. However, in view of the small size of the putative binding pocket, it has been proposed that it may act rather as an amidase or a peptidase. In Rattus norvegicus (Rat), this protein is Phospholipase B-like 1 (Plbd1).